Consider the following 147-residue polypeptide: Large ribosomal subunit protein bL9 (147 aa).

Belongs to the bacterial ribosomal protein bL9 family.

Functionally, binds to the 23S rRNA. The sequence is that of Large ribosomal subunit protein bL9 from Thermodesulfovibrio yellowstonii (strain ATCC 51303 / DSM 11347 / YP87).